The primary structure comprises 113 residues: Hydrogenase maturation factor HypA (113 aa).

Residue His-2 coordinates Ni(2+). The Zn(2+) site is built by Cys-73, Cys-76, Cys-89, and Cys-92.

The protein belongs to the HypA/HybF family.

In terms of biological role, involved in the maturation of [NiFe] hydrogenases. Required for nickel insertion into the metal center of the hydrogenase. The chain is Hydrogenase maturation factor HypA from Prosthecochloris aestuarii (strain DSM 271 / SK 413).